A 161-amino-acid polypeptide reads, in one-letter code: Transcription antitermination protein NusB (161 aa).

Residues 1–22 (MNLSDFKPGEGTEVPEEEKSVS) form a disordered region.

The protein belongs to the NusB family.

In terms of biological role, involved in transcription antitermination. Required for transcription of ribosomal RNA (rRNA) genes. Binds specifically to the boxA antiterminator sequence of the ribosomal RNA (rrn) operons. The chain is Transcription antitermination protein NusB from Hydrogenovibrio crunogenus (strain DSM 25203 / XCL-2) (Thiomicrospira crunogena).